A 109-amino-acid chain; its full sequence is Protein TAR1 (109 aa).

The segment at 62–109 is disordered; it reads HFTNNWDPRHTGFSPSMTSCSKEHRQGPATKLPSSNYNSDVEDARFQI.

Its subcellular location is the mitochondrion. Functionally, may be involved in mtDNA stability or mitochondrial gene expression regulation at the post-transcriptional level. This is Protein TAR1 (TAR1-A) from Kluyveromyces lactis (strain ATCC 8585 / CBS 2359 / DSM 70799 / NBRC 1267 / NRRL Y-1140 / WM37) (Yeast).